A 1104-amino-acid polypeptide reads, in one-letter code: Protein KIBRA (1104 aa).

2 consecutive WW domains span residues 6–39 (LPLPEGWEEARDFDGKVYYIDHRNRTTSWIDPRD) and 53–86 (DELPLGWEEAYDPQVGDYFIDHNTKTTQIEDPRV). Positions 107–193 (LSAQKEIYQV…ELQFKERGFQ (87 aa)) form a coiled coil. Serine 141 bears the Phosphoserine mark. 2 disordered regions span residues 429–449 (SMQSLSSGSSPGSLTSSRGSL) and 509–547 (TQKAEGGSRLQALRSLSGTPRSMTSLSPRSSLSSPSPPC). The span at 527 to 542 (TPRSMTSLSPRSSLSS) shows a compositional bias: low complexity. Serine 535 is modified (phosphoserine). Residue serine 542 is modified to Phosphoserine; by CDK1. A C2 domain is found at 659 to 782 (GATRVQIALK…RSGERSTRWY (124 aa)). Residues 822–949 (LEKRQEGRSS…DSSTLSKKPP (128 aa)) form a disordered region. Residues 836–1104 (EGSWTYEEEA…NIPALSADDV (269 aa)) form an interaction with histone H3 region. Over residues 841 to 862 (YEEEASENEAVAEEEEEGEEDV) the composition is skewed to acidic residues. Serine 887, serine 891, and serine 919 each carry phosphoserine. A compositionally biased stretch (polar residues) spans 916 to 930 (IIRSKTFSPGPQSQY). Threonine 921 is subject to Phosphothreonine. The residue at position 923 (serine 923) is a Phosphoserine; by CDK1. At serine 939 the chain carries Phosphoserine. Interaction with PRKCZ regions lie at residues 945–988 (SKKP…LDLQ) and 948–967 (PPFVRNSLERRSVRMKRPSS). Phosphoserine; by PKC/PRKCZ is present on residues serine 967 and serine 970. A coiled-coil region spans residues 994 to 1024 (HSQLTQEISVLKELKEHLEQAKNHGEKELPQ). The ADDV motif signature appears at 1102–1104 (DDV).

It belongs to the WWC family. KIBRA subfamily. In terms of assembly, homodimer. Forms heterodimers with WWC2 and WWC3. Interacts with DDN. Interacts with DYNLL1 and histone H3. The interaction with DYNLL1 is mandatory for the recruitment and transactivation functions of ESR1 or DYNLL1 to the target chromatin and the interaction with histone H3 ensures proper regulatory interaction of WWC1-DYNLL1-ESR1 complexes with target chromatin. Interacts (via WW domains) with DDR1 (via PPxY motif) in a collagen-regulated manner. Interacts with PRKCZ (via the protein kinase domain). Forms a tripartite complex with DDR1 and PRKCZ, but predominantly in the absence of collagen. Interacts (via the ADDV motif) with PATJ (via PDZ domain 8). Interacts (via WW domains) with SYNPO (via PPxY motifs). Interacts with NF2 and SNX4. Interacts with CCDC141; retains AMPAR in the cytosol after internalization. Interacts with DLC1 and PRKCZ. Interacts (via WW domains) with LATS1 and LATS2. Post-translationally, phosphorylation at Ser-542 and Ser-923 by CDK1 in response to spindle damage stress regulates mitotic exit, these two sites are dephosphorylated by CDC14B. As to expression, mammary epithelium.

The protein resides in the cytoplasm. It is found in the perinuclear region. The protein localises to the nucleus. It localises to the cell projection. Its subcellular location is the ruffle membrane. The protein resides in the cytosol. Regulator of the Hippo signaling pathway, also known as the Salvador-Warts-Hippo (SWH) pathway. Enhances phosphorylation of LATS1 and YAP1 and negatively regulates cell proliferation and organ growth due to a suppression of the transcriptional activity of YAP1, the major effector of the Hippo pathway. Along with NF2 can synergistically induce the phosphorylation of LATS1 and LATS2 and function in the regulation of Hippo signaling pathway. Acts as a transcriptional coactivator of ESR1 which plays an essential role in DYNLL1-mediated ESR1 transactivation. Modulates directional migration of podocytes. May be associated with memory performance. Regulates collagen-stimulated activation of the ERK/MAPK cascade. Plays an important role in regulating AMPA-selective glutamate receptors (AMPARs) trafficking. This chain is Protein KIBRA (Wwc1), found in Mus musculus (Mouse).